Consider the following 263-residue polypeptide: Sepiapterin reductase (263 aa).

NADP(+) contacts are provided by residues 18-24 (GASRGFG), 46-47 (RT), and 73-74 (DL). Residues 160-161 (SL) and tyrosine 173 each bind substrate. Lysine 177 serves as a coordination point for NADP(+). Position 202 (glycine 202) interacts with substrate. 204 to 209 (LDTDMH) is a binding site for NADP(+). Aspartate 260 provides a ligand contact to substrate.

This sequence belongs to the sepiapterin reductase family. In terms of assembly, homodimer.

Its subcellular location is the cytoplasm. It carries out the reaction L-erythro-7,8-dihydrobiopterin + NADP(+) = L-sepiapterin + NADPH + H(+). The catalysed reaction is (6R)-L-erythro-5,6,7,8-tetrahydrobiopterin + 2 NADP(+) = 6-pyruvoyl-5,6,7,8-tetrahydropterin + 2 NADPH + 2 H(+). Its function is as follows. Catalyzes the final one or two reductions in tetra-hydrobiopterin biosynthesis to form 5,6,7,8-tetrahydrobiopterin. The protein is Sepiapterin reductase (spr) of Xenopus laevis (African clawed frog).